Reading from the N-terminus, the 393-residue chain is MKDVVIVGALRTPIGCFRGALAGHSAVELGSLVVKALIERTGVPAYAVDEVILGQVLTAGAGQNPARQSAIKGGLPNSVSAITINDVCGSGLKALHLATQAIQCGEADIVIAGGQENMSRAPHVLTDSRTGAQLGNSQLVDSLVHDGLWDAFNDYHIGVTAENLAREYGISRQLQDAYALSSQQKARAAIDAGRFKDEIVPVMTQSNGQTLVVDTDEQPRTDASAEGLARLNPSFDSLGSVTAGNASSINDGAAAVMMMSEAKARALNLPVLARIRAFASVGVDPALMGIAPVYATRRCLERVGWQLAEVDLIEANEAFAAQALSVGKMLEWDERRVNVNGGAIALGHPIGASGCRILVSLVHEMVKRNARKGLATLCIGGGQGVALTIERDE.

The Acyl-thioester intermediate role is filled by C88. Catalysis depends on proton acceptor residues H348 and C378.

It belongs to the thiolase-like superfamily. Thiolase family.

Its subcellular location is the cytoplasm. The catalysed reaction is 2 acetyl-CoA = acetoacetyl-CoA + CoA. This is Probable acetyl-CoA acetyltransferase (yqeF) from Escherichia coli (strain K12).